A 152-amino-acid polypeptide reads, in one-letter code: Large ribosomal subunit protein uL15 (152 aa).

The tract at residues 1–57 is disordered; sequence MTSTLNTLKSNSGSRKKKLRKGRGIAAGQGASCGFGMRGQKSRSGRPTRPGFEGGQM. Over residues 14 to 23 the composition is skewed to basic residues; the sequence is SRKKKLRKGR. Gly residues predominate over residues 25-37; sequence IAAGQGASCGFGM.

It belongs to the universal ribosomal protein uL15 family. In terms of assembly, part of the 50S ribosomal subunit.

In terms of biological role, binds to the 23S rRNA. The sequence is that of Large ribosomal subunit protein uL15 from Prochlorococcus marinus (strain AS9601).